A 437-amino-acid polypeptide reads, in one-letter code: Vacuolar protein sorting-associated protein 4A (437 aa).

The MIT domain occupies 2-80; the sequence is TTSTLQKAID…KDYLRNKEKH (79 aa). The residue at position 8 (Lys-8) is an N6-acetyllysine. A coiled-coil region spans residues 15 to 37; that stretch reads KATEEDKAKNYEEALRLYQHAVE. Residues 75 to 106 form a disordered region; it reads RNKEKHGKKPVKENQSEGKGSDSDSEGDNPEK. The span at 84 to 96 shows a compositional bias: basic and acidic residues; that stretch reads PVKENQSEGKGSD. Phosphoserine is present on residues Ser-95 and Ser-97. 167 to 174 is an ATP binding site; it reads GPPGTGKS.

The protein belongs to the AAA ATPase family. Proposed to be monomeric or homodimeric in nucleotide-free form and to oligomerize upon binding to ATP to form two stacked hexameric or heptameric rings with a central pore through which ESCRT-III substrates are translocated in an ATP-dependent manner. Interacts with CHMP1A, CHMP1B, CHMP2A, CHMP2B, CHMP3, CHMP4A, CHMP4B, CHMP4C and CHMP6. Interacts with VPS4B; the interaction suggests a heteromeric assembly with VPS4B. Interacts with SPAST. Interacts with IST1. Interacts with ZFYVE19/ANCHR; leading to retain it at midbody. In terms of tissue distribution, highly expressed in testis and moderately in heart and brain. Not detected in spleen, lung, liver, skeletal muscle or kidney.

It is found in the late endosome membrane. The protein localises to the midbody. The protein resides in the cytoplasm. Its subcellular location is the cytoskeleton. It localises to the spindle. It carries out the reaction ATP + H2O = ADP + phosphate + H(+). Its function is as follows. Involved in late steps of the endosomal multivesicular bodies (MVB) pathway. Recognizes membrane-associated ESCRT-III assemblies and catalyzes their disassembly, possibly in combination with membrane fission. Redistributes the ESCRT-III components to the cytoplasm for further rounds of MVB sorting. MVBs contain intraluminal vesicles (ILVs) that are generated by invagination and scission from the limiting membrane of the endosome and mostly are delivered to lysosomes enabling degradation of membrane proteins, such as stimulated growth factor receptors, lysosomal enzymes and lipids. It is required for proper accomplishment of various processes including the regulation of endosome size, primary cilium organization, mitotic spindle organization and chromosome segregation, and nuclear envelope sealing and spindle disassembly during anaphase. In conjunction with the ESCRT machinery also appears to function in topologically equivalent membrane fission events, such as the terminal stages of cytokinesis. Involved in cytokinesis: retained at the midbody by ZFYVE19/ANCHR and CHMP4C until abscission checkpoint signaling is terminated at late cytokinesis. It is then released following dephosphorylation of CHMP4C, leading to abscission. VPS4A/B are required for the exosomal release of SDCBP, CD63 and syndecan. Critical for normal erythroblast cytokinesis and correct erythropoiesis. This is Vacuolar protein sorting-associated protein 4A from Mus musculus (Mouse).